Consider the following 171-residue polypeptide: Peptide deformylase (171 aa).

Fe cation-binding residues include Cys91 and His133. Glu134 is a catalytic residue. Position 137 (His137) interacts with Fe cation.

The protein belongs to the polypeptide deformylase family. Requires Fe(2+) as cofactor.

The enzyme catalyses N-terminal N-formyl-L-methionyl-[peptide] + H2O = N-terminal L-methionyl-[peptide] + formate. Its function is as follows. Removes the formyl group from the N-terminal Met of newly synthesized proteins. Requires at least a dipeptide for an efficient rate of reaction. N-terminal L-methionine is a prerequisite for activity but the enzyme has broad specificity at other positions. The chain is Peptide deformylase from Sodalis glossinidius (strain morsitans).